The sequence spans 421 residues: Tol-Pal system protein TolB (421 aa).

The first 16 residues, 1–16 (MRILVFLWLGLSSLFA), serve as a signal peptide directing secretion.

It belongs to the TolB family. As to quaternary structure, the Tol-Pal system is composed of five core proteins: the inner membrane proteins TolA, TolQ and TolR, the periplasmic protein TolB and the outer membrane protein Pal. They form a network linking the inner and outer membranes and the peptidoglycan layer.

The protein resides in the periplasm. Part of the Tol-Pal system, which plays a role in outer membrane invagination during cell division and is important for maintaining outer membrane integrity. This Wolinella succinogenes (strain ATCC 29543 / DSM 1740 / CCUG 13145 / JCM 31913 / LMG 7466 / NCTC 11488 / FDC 602W) (Vibrio succinogenes) protein is Tol-Pal system protein TolB.